Consider the following 609-residue polypeptide: Glutamine--fructose-6-phosphate aminotransferase [isomerizing] (609 aa).

The active-site Nucleophile; for GATase activity is cysteine 2. Residues 2 to 219 (CGIVAAVTQR…EGDIAIVARK (218 aa)) enclose the Glutamine amidotransferase type-2 domain. 2 consecutive SIS domains span residues 288-428 (ENNI…SKKE) and 460-599 (MANT…IDQP). The active-site For Fru-6P isomerization activity is the lysine 604.

As to quaternary structure, homodimer.

It localises to the cytoplasm. It catalyses the reaction D-fructose 6-phosphate + L-glutamine = D-glucosamine 6-phosphate + L-glutamate. In terms of biological role, catalyzes the first step in hexosamine metabolism, converting fructose-6P into glucosamine-6P using glutamine as a nitrogen source. The sequence is that of Glutamine--fructose-6-phosphate aminotransferase [isomerizing] from Buchnera aphidicola subsp. Acyrthosiphon pisum (strain APS) (Acyrthosiphon pisum symbiotic bacterium).